Consider the following 48-residue polypeptide: Disintegrin accutin (48 aa).

Gln-1 carries the post-translational modification Pyrrolidone carboxylic acid. The Disintegrin domain maps to 1–48; the sequence is QGAQCTAGPCCWPCKFLKEGTICRRARGDDLDDYCNGISADCPRNPYY. 3 disulfide bridges follow: Cys-5-Cys-11, Cys-10-Cys-35, and Cys-23-Cys-42. The Cell attachment site motif lies at 27 to 29; it reads RGD.

Belongs to the venom metalloproteinase (M12B) family. P-II subfamily. P-IIa sub-subfamily. Monomer (disintegrin). Expressed by the venom gland.

It localises to the secreted. Inhibit human platelet aggregation induced by ADP, collagen, thrombin or the thromboxane analog U46619 in platelet suspension with IC(50) values of 66-267 nM. Acts by inhibiting fibrinogen interaction with platelet receptors GPIIb/GPIIIa (ITGA2B/ITGB3). It also inhibits angiogenesis in vivo and in vitro by blocking integrin alpha-V/beta-3 (ITGAV/ITGB3) of endothelial cells and by inducing apoptosis. The chain is Disintegrin accutin from Deinagkistrodon acutus (Hundred-pace snake).